We begin with the raw amino-acid sequence, 1059 residues long: Carbamoyl phosphate synthase large chain (1059 aa).

A carboxyphosphate synthetic domain region spans residues 1-401 (MPKRKDIQKV…AMLKAVRSLE (401 aa)). ATP is bound by residues R129, R169, G175, G176, R208, I210, E215, G241, V242, H243, Q284, and E298. The 195-residue stretch at 133 to 327 (KALMERLNEP…IAKMAAKIAV (195 aa)) folds into the ATP-grasp 1 domain. Q284, E298, and N300 together coordinate Mg(2+). Residues Q284, E298, and N300 each coordinate Mn(2+). The segment at 402-546 (IGVTGLNDLT…YATYERENES (145 aa)) is oligomerization domain. The interval 547–929 (VRSKKPSVIV…ALYKAFVASN (383 aa)) is carbamoyl phosphate synthetic domain. Positions 671-861 (DQVIKTLALP…LAQLATRVML (191 aa)) constitute an ATP-grasp 2 domain. ATP contacts are provided by R707, S746, L748, E752, G777, V778, H779, S780, Q820, and E832. Q820, E832, and N834 together coordinate Mg(2+). The Mn(2+) site is built by Q820, E832, and N834. One can recognise an MGS-like domain in the interval 930–1059 (IKVPQYGNVL…SRSFTVNEMK (130 aa)). Positions 930 to 1059 (IKVPQYGNVL…SRSFTVNEMK (130 aa)) are allosteric domain.

Belongs to the CarB family. As to quaternary structure, composed of two chains; the small (or glutamine) chain promotes the hydrolysis of glutamine to ammonia, which is used by the large (or ammonia) chain to synthesize carbamoyl phosphate. Tetramer of heterodimers (alpha,beta)4. Mg(2+) is required as a cofactor. Mn(2+) serves as cofactor.

It carries out the reaction hydrogencarbonate + L-glutamine + 2 ATP + H2O = carbamoyl phosphate + L-glutamate + 2 ADP + phosphate + 2 H(+). The enzyme catalyses hydrogencarbonate + NH4(+) + 2 ATP = carbamoyl phosphate + 2 ADP + phosphate + 2 H(+). The protein operates within amino-acid biosynthesis; L-arginine biosynthesis; carbamoyl phosphate from bicarbonate: step 1/1. It functions in the pathway pyrimidine metabolism; UMP biosynthesis via de novo pathway; (S)-dihydroorotate from bicarbonate: step 1/3. Functionally, large subunit of the glutamine-dependent carbamoyl phosphate synthetase (CPSase). CPSase catalyzes the formation of carbamoyl phosphate from the ammonia moiety of glutamine, carbonate, and phosphate donated by ATP, constituting the first step of 2 biosynthetic pathways, one leading to arginine and/or urea and the other to pyrimidine nucleotides. The large subunit (synthetase) binds the substrates ammonia (free or transferred from glutamine from the small subunit), hydrogencarbonate and ATP and carries out an ATP-coupled ligase reaction, activating hydrogencarbonate by forming carboxy phosphate which reacts with ammonia to form carbamoyl phosphate. In Leuconostoc citreum (strain KM20), this protein is Carbamoyl phosphate synthase large chain.